The sequence spans 274 residues: ATP synthase subunit a (274 aa).

The next 5 membrane-spanning stretches (helical) occupy residues 43-63 (TLNI…LFVF), 103-123 (VIAP…MMDL), 149-169 (DVSI…FYSI), 223-243 (LIFI…LSLP), and 245-265 (AIFH…LTIV).

Belongs to the ATPase A chain family. F-type ATPases have 2 components, CF(1) - the catalytic core - and CF(0) - the membrane proton channel. CF(1) has five subunits: alpha(3), beta(3), gamma(1), delta(1), epsilon(1). CF(0) has three main subunits: a(1), b(2) and c(9-12). The alpha and beta chains form an alternating ring which encloses part of the gamma chain. CF(1) is attached to CF(0) by a central stalk formed by the gamma and epsilon chains, while a peripheral stalk is formed by the delta and b chains.

Its subcellular location is the cell inner membrane. Functionally, key component of the proton channel; it plays a direct role in the translocation of protons across the membrane. This chain is ATP synthase subunit a, found in Yersinia enterocolitica serotype O:8 / biotype 1B (strain NCTC 13174 / 8081).